A 495-amino-acid polypeptide reads, in one-letter code: Averantin hydroxylase (495 aa).

The chain crosses the membrane as a helical span at residues 12-32 (ILLLIVLTVLTPPSLALYRLW). N-linked (GlcNAc...) asparagine glycosylation is found at Asn-258 and Asn-289. Residue Cys-436 coordinates heme.

Belongs to the cytochrome P450 family. Requires heme as cofactor.

The protein resides in the membrane. It catalyses the reaction (1'S)-averantin + reduced [NADPH--hemoprotein reductase] + O2 = (1'S,5'R)-5'-hydroxyaverantin + oxidized [NADPH--hemoprotein reductase] + H2O. The catalysed reaction is (1'S)-averantin + reduced [NADPH--hemoprotein reductase] + O2 = (1'S,5'S)-5'-hydroxyaverantin + oxidized [NADPH--hemoprotein reductase] + H2O + H(+). It functions in the pathway mycotoxin biosynthesis; aflatoxin biosynthesis. In terms of biological role, averantin hydroxylase; part of the gene cluster that mediates the biosynthesis of aflatoxins, a group of polyketide-derived furanocoumarins, and part of the most toxic and carcinogenic compounds among the known mycotoxins. The four major aflatoxins produced by A.parasiticus are aflatoxin B1 (AFB1), aflatoxin B2 (AFB2), aflatoxin G1 (AFG1) and aflatoxin G2 (AFG2). Within the aflatoxin pathway, the cytochrome P450 monooxygenase aflG catalyzes the hydroxylation of AVN to 5'hydroxyaverantin (HAVN). The biosynthesis of aflatoxins begins with the norsolorinic acid synthase aflC that combines a hexanoyl starter unit produced by the fatty acid synthase aflA/aflB and 7 malonyl-CoA extender units to synthesize the precursor NOR. The second step is the conversion of NOR to averantin and requires the norsolorinic acid ketoreductase aflD, which catalyzes the dehydration of norsolorinic acid to form (1'S)-averantin. The norsolorinic acid reductases aflE and aflF may also play a role in the conversion of NOR to AVN. The cytochrome P450 monooxygenase aflG then catalyzes the hydroxylation of AVN to 5'hydroxyaverantin (HAVN). The next step is performed by the 5'-hydroxyaverantin dehydrogenase aflH that transforms HAVN to 5'-oxoaverantin (OAVN) which is further converted to averufin (AVF) by aflK that plays a dual role in the pathway, as a 5'-oxoaverantin cyclase that mediates conversion of 5'-oxoaverantin, as well as a versicolorin B synthase in a later step in the pathway. The averufin oxidase aflI catalyzes the conversion of AVF to versiconal hemiacetal acetate (VHA). VHA is then the substrate for the versiconal hemiacetal acetate esterase aflJ to yield versiconal (VAL). Versicolorin B synthase aflK then converts VAL to versicolorin B (VERB) by closing the bisfuran ring of aflatoxin which is required for DNA-binding, thus giving to aflatoxin its activity as a mutagen. Then, the activity of the versicolorin B desaturase aflL leads to versicolorin A (VERA). A branch point starts from VERB since it can also be converted to dihydrodemethylsterigmatocystin (DMDHST), probably also by aflL, VERA being a precursor for aflatoxins B1 and G1, and DMDHST for aflatoxins B2 and G2. Next, the versicolorin reductase aflM and the cytochrome P450 monooxygenase aflN are involved in conversion of VERA to demethylsterigmatocystin (DMST). AflX and aflY seem also involved in this step, through probable aflX-mediated epoxide ring-opening step following versicolorin A oxidation and aflY-mediated Baeyer-Villiger oxidation required for the formation of the xanthone ring. The methyltransferase aflO then leads to the modification of DMST to sterigmatocystin (ST), and of DMDHST to dihydrosterigmatocystin (DHST). Both ST and DHST are then substrates of the O-methyltransferase aflP to yield O-methylsterigmatocystin (OMST) and dihydro-O-methylsterigmatocystin (DHOMST), respectively. Finally OMST is converted to aflatoxins B1 and G1, and DHOMST to aflatoxins B2 and G2, via the action of several enzymes including O-methylsterigmatocystin oxidoreductase aflQ, the cytochrome P450 monooxygenase aflU, but also the NADH-dependent flavin oxidoreductase nadA which is specifically required for the synthesis of AFG1. The chain is Averantin hydroxylase from Aspergillus parasiticus (strain ATCC 56775 / NRRL 5862 / SRRC 143 / SU-1).